The primary structure comprises 521 residues: Bacillolysin (521 aa).

The signal sequence occupies residues 1 to 27; sequence MGLGKKLSVAVAASFMSLTISLPGVQA. Positions 28 to 221 are cleaved as a propeptide — activation peptide; that stretch reads AENPQLKENL…ILKKQNKVEH (194 aa). Residues glutamine 283 and aspartate 360 each coordinate Ca(2+). Histidine 364 is a Zn(2+) binding site. Residue glutamate 365 is part of the active site. Zn(2+) contacts are provided by histidine 368 and glutamate 388. The Ca(2+) site is built by aspartate 399, aspartate 402, aspartate 404, glutamate 407, and valine 411. Histidine 449 (proton donor) is an active-site residue.

It belongs to the peptidase M4 family. The cofactor is Ca(2+). Zn(2+) serves as cofactor.

It is found in the secreted. The enzyme catalyses Similar, but not identical, to that of thermolysin.. Extracellular zinc metalloprotease. The chain is Bacillolysin (npr) from Bacillus amyloliquefaciens (Bacillus velezensis).